Reading from the N-terminus, the 481-residue chain is Probable glycine dehydrogenase (decarboxylating) subunit 2 (481 aa).

N6-(pyridoxal phosphate)lysine is present on K265.

This sequence belongs to the GcvP family. C-terminal subunit subfamily. As to quaternary structure, the glycine cleavage system is composed of four proteins: P, T, L and H. In this organism, the P 'protein' is a heterodimer of two subunits. It depends on pyridoxal 5'-phosphate as a cofactor.

It catalyses the reaction N(6)-[(R)-lipoyl]-L-lysyl-[glycine-cleavage complex H protein] + glycine + H(+) = N(6)-[(R)-S(8)-aminomethyldihydrolipoyl]-L-lysyl-[glycine-cleavage complex H protein] + CO2. Functionally, the glycine cleavage system catalyzes the degradation of glycine. The P protein binds the alpha-amino group of glycine through its pyridoxal phosphate cofactor; CO(2) is released and the remaining methylamine moiety is then transferred to the lipoamide cofactor of the H protein. This Thermosipho melanesiensis (strain DSM 12029 / CIP 104789 / BI429) protein is Probable glycine dehydrogenase (decarboxylating) subunit 2.